Reading from the N-terminus, the 514-residue chain is CENP-B homolog protein 2 (514 aa).

Residues 70-145 (QIRRNRQGKY…KKRCLKHGLK (76 aa)) form the HTH CENPB-type domain. Residues 172 to 384 (FDPKDIFNMD…FEPSIIYNCF (213 aa)) form the DDE-1 domain.

The protein resides in the nucleus. Its subcellular location is the chromosome. The protein localises to the centromere. Its function is as follows. Binds to the central core and core-associated repeat regions of centromeric heterochromatin. The sequence is that of CENP-B homolog protein 2 (cbh2) from Schizosaccharomyces pombe (strain 972 / ATCC 24843) (Fission yeast).